A 283-amino-acid chain; its full sequence is 1-deoxypentalenic acid 11-beta-hydroxylase (283 aa).

Arg117 lines the substrate pocket. 2 residues coordinate Fe cation: His135 and Asp137. 2-oxoglutarate-binding positions include 135-137 and Trp151; that span reads HQD. Arg186 provides a ligand contact to substrate. Fe cation is bound at residue His224. 2-oxoglutarate-binding residues include Ser226 and Arg238. The segment at 260–283 is disordered; the sequence is WPESAKDASKGILSKITGTPTTAE.

It belongs to the PhyH family. Fe cation serves as cofactor. Requires L-ascorbate as cofactor.

It carries out the reaction 1-deoxypentalenate + 2-oxoglutarate + O2 = 1-deoxy-11beta-hydroxypentalenate + succinate + CO2. It functions in the pathway antibiotic biosynthesis; pentalenolactone biosynthesis. Functionally, catalyzes the conversion of 1-deoxypentalenic acid to 11-beta-hydroxy-1-deoxypentalenic acid in the biosynthesis of pentalenolactone antibiotic. This Streptomyces exfoliatus (Streptomyces hydrogenans) protein is 1-deoxypentalenic acid 11-beta-hydroxylase (penH).